The primary structure comprises 79 residues: Small ribosomal subunit protein bS16cz (79 aa).

This sequence belongs to the bacterial ribosomal protein bS16 family.

It localises to the plastid. The protein resides in the chloroplast. This Arabidopsis thaliana (Mouse-ear cress) protein is Small ribosomal subunit protein bS16cz.